Reading from the N-terminus, the 576-residue chain is 5'-nucleotidase (576 aa).

The signal sequence occupies residues 1–28; sequence MRPAAAKVPKWLLLALSALLPQWPAASA. Positions 38 and 40 each coordinate Zn(2+). Residues Cys-53 and Cys-59 are joined by a disulfide bond. N-linked (GlcNAc...) asparagine glycosylation occurs at Asn-55. Positions 87, 119, 222, and 245 each coordinate Zn(2+). Residues Asn-313 and Asn-335 are each glycosylated (N-linked (GlcNAc...) asparagine). 2 disulfide bridges follow: Cys-355–Cys-360 and Cys-367–Cys-389. Arg-356 serves as a coordination point for AMP. Arg-356 lines the IMP pocket. 2 residues coordinate AMP: Asn-392 and Arg-397. IMP-binding residues include Asn-392 and Arg-397. Asn-405 carries N-linked (GlcNAc...) asparagine glycosylation. Phe-419 lines the AMP pocket. Phe-419 provides a ligand contact to IMP. Cysteines 478 and 481 form a disulfide. The AMP site is built by Tyr-502 and Asp-508. IMP-binding residues include Tyr-502 and Asp-508. Residue Ser-551 is the site of GPI-anchor amidated serine attachment. Positions 552-576 are cleaved as a propeptide — removed in mature form; sequence AASHYQGSFPLVILSFWAMILILYQ.

The protein belongs to the 5'-nucleotidase family. In terms of assembly, homodimer. Zn(2+) is required as a cofactor. In terms of tissue distribution, expressed at high levels in the placenta, kidney, lung and stomach and at lower levels in the thymus, spleen, skeletal muscle and esophagus.

It localises to the cell membrane. It catalyses the reaction a ribonucleoside 5'-phosphate + H2O = a ribonucleoside + phosphate. The catalysed reaction is a 2'-deoxyribonucleoside 5'-phosphate + H2O = a 2'-deoxyribonucleoside + phosphate. It carries out the reaction dTMP + H2O = thymidine + phosphate. The enzyme catalyses CMP + H2O = cytidine + phosphate. It catalyses the reaction IMP + H2O = inosine + phosphate. The catalysed reaction is AMP + H2O = adenosine + phosphate. It carries out the reaction GMP + H2O = guanosine + phosphate. The enzyme catalyses UMP + H2O = uridine + phosphate. It catalyses the reaction dAMP + H2O = 2'-deoxyadenosine + phosphate. The catalysed reaction is dCMP + H2O = 2'-deoxycytidine + phosphate. Its function is as follows. Catalyzes the hydrolysis of nucleotide monophosphates, releasing inorganic phosphate and the corresponding nucleoside. Hydrolyzes IMP. Shows a preference for ribonucleotide monophosphates over their equivalent deoxyribose forms. Although AMP is the preferred substrate can also hydrolyze UMP, GMP, CMP, dAMP, dCMP, dTMP, NAD and NMN. This chain is 5'-nucleotidase (Nt5e), found in Mus musculus (Mouse).